A 347-amino-acid chain; its full sequence is N-acetyl-gamma-glutamyl-phosphate reductase (347 aa).

Residue cysteine 151 is part of the active site.

It belongs to the NAGSA dehydrogenase family. Type 1 subfamily.

It localises to the cytoplasm. The enzyme catalyses N-acetyl-L-glutamate 5-semialdehyde + phosphate + NADP(+) = N-acetyl-L-glutamyl 5-phosphate + NADPH + H(+). The protein operates within amino-acid biosynthesis; L-arginine biosynthesis; N(2)-acetyl-L-ornithine from L-glutamate: step 3/4. Functionally, catalyzes the NADPH-dependent reduction of N-acetyl-5-glutamyl phosphate to yield N-acetyl-L-glutamate 5-semialdehyde. The protein is N-acetyl-gamma-glutamyl-phosphate reductase of Corynebacterium glutamicum (strain R).